The chain runs to 222 residues: MKKHLLPLALLFSGISPAQALDVGDISSFMNSDSSTLSKTIQNSTDSGRLINIRLERLSSPLDDGQVIAMDKPDELLLTPASLLLPAQASEVIRFFYKGPADEKERYYRIVWFDQALSDAQRDNANRSAVATASARIGTILVVAPRQANYHFQYANGSLTNTGNATLRILAYGPCLKAANGKECKENYYLMPGKSRRFTHVDTADNKGRVALWQGDKFIPVK.

The N-terminal stretch at 1 to 20 (MKKHLLPLALLFSGISPAQA) is a signal peptide.

The protein belongs to the EcpB/EcpE family.

In terms of biological role, part of the ecpRABCDE operon, which encodes the E.coli common pilus (ECP). ECP is found in both commensal and pathogenic strains and plays a dual role in early-stage biofilm development and host cell recognition. This chain is Probable fimbrial chaperone EcpB (ecpB), found in Escherichia coli O18:K1:H7 (strain IHE3034 / ExPEC).